We begin with the raw amino-acid sequence, 302 residues long: Large ribosomal subunit protein uL3c (302 aa).

A chloroplast-targeting transit peptide spans 1–36 (MFQSSRLVALGLCAALVLVGGSIILSGLSPNLSSPM). The interval 208–239 (FQGSIRRWGMKRGPMSHGSKSHRQHGSIGCSA) is disordered.

Belongs to the universal ribosomal protein uL3 family. Part of the 50S ribosomal subunit.

The protein resides in the plastid. It is found in the chloroplast. Its function is as follows. One of the primary rRNA binding proteins, it binds directly near the 3'-end of the 23S rRNA, where it nucleates assembly of the 50S subunit. The protein is Large ribosomal subunit protein uL3c (RPL3) of Bigelowiella natans (Pedinomonas minutissima).